A 344-amino-acid polypeptide reads, in one-letter code: Nuclear distribution protein nudE homolog 1 (344 aa).

A self-association region spans residues 1 to 93; that stretch reads MEDSGKTFGS…MQHSEGYRQI (93 aa). A coiled-coil region spans residues 18–188; it reads WRDLAMTYKQ…ELAVQQKQDK (171 aa). Positions 30-47 are enriched in basic and acidic residues; it reads ENTQEELREFQEGSREYE. The tract at residues 30–65 is disordered; that stretch reads ENTQEELREFQEGSREYEAELETQLQQAETRNRDLL. The segment at 88-156 is interaction with PAFAH1B1; the sequence is EGYRQISALE…ERNAFLESEL (69 aa). The segment at 167–290 is interaction with CENPF; it reads QRLKDEARDL…QSPSRKSGPA (124 aa). A disordered region spans residues 181 to 243; the sequence is AVQQKQDKPR…CGLGSPSSGT (63 aa). The segment covering 208 to 230 has biased composition (polar residues); it reads ATGSAPSTPITHQGSSSGLNTPE. Serine 211 is subject to Phosphoserine. Threonine 215, threonine 228, threonine 243, and threonine 246 each carry phosphothreonine. Cysteine 274 carries S-palmitoyl cysteine; by ZDHHC2, ZDHHC3 and ZDHHC7 lipidation. The interval 279–337 is disordered; that stretch reads YDQSPSRKSGPALGRGTKNRDGIDRRPGSTAVGDKGSGKRLEFAKPSSQLSSPALPSTQ. Phosphoserine is present on serine 282. A compositionally biased stretch (basic and acidic residues) spans 296 to 305; it reads KNRDGIDRRP. The segment covering 324 to 335 has biased composition (low complexity); sequence PSSQLSSPALPS.

It belongs to the nudE family. Homodimer. Interacts with CNTRL, LIS1, dynein, SLMAP and TCP1. Interacts with CENPF, dynactin, tubulin gamma, PAFAH1B1, PCM1 and PCNT. Interacts with ZNF365. Interacts with GTP-bound RAB9A and RAB9B; the interaction leads to RAB9-dynein motor tethering. Interacts (via C-terminus) with MCRS1 (via C-terminus); phosphorylation of NDE1 inhibits the interaction. In terms of processing, phosphorylated in mitosis. Phosphorylation at Thr-246 is essential for the G2/M transition. Expressed in brain, heart, kidney, liver, lung, skeletal muscle, spleen and testis.

It localises to the cytoplasm. It is found in the cytoskeleton. Its subcellular location is the microtubule organizing center. The protein resides in the centrosome. The protein localises to the spindle. It localises to the chromosome. It is found in the centromere. Its subcellular location is the kinetochore. The protein resides in the cleavage furrow. The protein localises to the cytoplasmic vesicle membrane. Its function is as follows. Required for centrosome duplication and formation and function of the mitotic spindle. Essential for the development of the cerebral cortex. May regulate the production of neurons by controlling the orientation of the mitotic spindle during division of cortical neuronal progenitors of the proliferative ventricular zone of the brain. Orientation of the division plane perpendicular to the layers of the cortex gives rise to two proliferative neuronal progenitors whereas parallel orientation of the division plane yields one proliferative neuronal progenitor and a postmitotic neuron. A premature shift towards a neuronal fate within the progenitor population may result in an overall reduction in the final number of neurons and an increase in the number of neurons in the deeper layers of the cortex. Acts as a RAB9A/B effector that tethers RAB9-associated late endosomes to the dynein motor for their retrograde transport to the trans-Golgi network. The chain is Nuclear distribution protein nudE homolog 1 from Rattus norvegicus (Rat).